Reading from the N-terminus, the 530-residue chain is UDP-N-acetylmuramoyl-L-alanyl-D-glutamate--2,6-diaminopimelate ligase (530 aa).

A UDP-N-acetyl-alpha-D-muramoyl-L-alanyl-D-glutamate-binding site is contributed by Ser-21. Residue Gly-99–Ser-105 coordinates ATP. Residues Thr-145–Thr-146, Ser-172, Gln-178, and Arg-180 each bind UDP-N-acetyl-alpha-D-muramoyl-L-alanyl-D-glutamate. Lys-212 carries the post-translational modification N6-carboxylysine. In terms of domain architecture, RPE1 insert spans Phe-221–Leu-269. Meso-2,6-diaminopimelate is bound by residues Arg-422, Asp-446–Arg-449, Gly-496, and Glu-500. The Meso-diaminopimelate recognition motif signature appears at Asp-446–Arg-449.

This sequence belongs to the MurCDEF family. MurE subfamily. Mg(2+) serves as cofactor. Carboxylation is probably crucial for Mg(2+) binding and, consequently, for the gamma-phosphate positioning of ATP.

The protein localises to the cytoplasm. The catalysed reaction is UDP-N-acetyl-alpha-D-muramoyl-L-alanyl-D-glutamate + meso-2,6-diaminopimelate + ATP = UDP-N-acetyl-alpha-D-muramoyl-L-alanyl-gamma-D-glutamyl-meso-2,6-diaminopimelate + ADP + phosphate + H(+). It functions in the pathway cell wall biogenesis; peptidoglycan biosynthesis. In terms of biological role, catalyzes the addition of meso-diaminopimelic acid to the nucleotide precursor UDP-N-acetylmuramoyl-L-alanyl-D-glutamate (UMAG) in the biosynthesis of bacterial cell-wall peptidoglycan. The chain is UDP-N-acetylmuramoyl-L-alanyl-D-glutamate--2,6-diaminopimelate ligase from Rickettsia felis (strain ATCC VR-1525 / URRWXCal2) (Rickettsia azadi).